Here is a 224-residue protein sequence, read N- to C-terminus: Claudin-19 (224 aa).

At 1-7 (MANSGLQ) the chain is on the cytoplasmic side. The helical transmembrane segment at 8–28 (LLGYFLALGGWVGIIASTALP) threads the bilayer. The Extracellular segment spans residues 29–81 (QWKQSSYAGDAIITAVGLYEGLWMSCASQSTGQVQCKLYDSLLALDGHIQSAR). The cysteines at positions 54 and 64 are disulfide-linked. The helical transmembrane segment at 82–102 (ALMVVAVLLGFVAMVLSVVGM) threads the bilayer. Over 103-117 (KCTRVGDSNPIAKGR) the chain is Cytoplasmic. A helical membrane pass occupies residues 118–138 (VAIAGGALFILAGLCTLTAVS). The Extracellular portion of the chain corresponds to 139–160 (WYATLVTQEFFNPSTPVNARYE). The chain crosses the membrane as a helical span at residues 161 to 181 (FGPALFVGWASAGLAVLGGSF). At 182 to 224 (LCCTCPEPERPNSSPQPYRPGPSAAAREPVVKLPASAKGPLGV) the chain is on the cytoplasmic side. Positions 191-224 (RPNSSPQPYRPGPSAAAREPVVKLPASAKGPLGV) are disordered.

This sequence belongs to the claudin family. Can form homo- and heteropolymeric tight junction strands. Interacts with other claudins including CLDN3, CLDN10, CLDN16 and CLDN18 with highest affinity for CLDN16. Interacts (via PDZ-binding motif TRV) with TJP1 (via PDZ domain).

The protein localises to the cell junction. Its subcellular location is the tight junction. The protein resides in the cell membrane. It catalyses the reaction Mg(2+)(in) = Mg(2+)(out). The catalysed reaction is Ca(2+)(in) = Ca(2+)(out). The enzyme catalyses Na(+)(in) = Na(+)(out). It carries out the reaction K(+)(in) = K(+)(out). It catalyses the reaction Rb(+)(in) = Rb(+)(out). The catalysed reaction is Cs(+)(in) = Cs(+)(out). The enzyme catalyses Li(+)(in) = Li(+)(out). Functionally, forms paracellular channels: coassembles with CLDN16 into tight junction strands with cation-selective channels through the strands, conveying epithelial permeability in a process known as paracellular tight junction permeability. Involved in the maintenance of ion gradients along the nephron. In the thick ascending limb (TAL) of Henle's loop, facilitates sodium paracellular permeability from the interstitial compartment to the lumen, contributing to the lumen-positive transepithelial potential that drives paracellular magnesium and calcium reabsorption. Forms paracellular barriers on its own. In the peripheral nervous system, represents a major constituent of the tight junctions in Schwann cells and contributes to electrical sealing. During retinal neurogenesis, may regulate the barrier properties of tight junctions in retinal pigment epithelium, required for proper retinal tissue differentiation and vision. This chain is Claudin-19, found in Homo sapiens (Human).